The chain runs to 475 residues: Chromosomal replication initiator protein DnaA (475 aa).

A domain I, interacts with DnaA modulators region spans residues 1–73; sequence MSDTEQERWS…LSCWQAELPD (73 aa). Residues 73-131 are domain II; it reads DVHRIDLTVRSAMRCAAPVREAPATDARHPERSEGRNGVELKTVATAPASANHDALGGS. Residues 132–354 are domain III, AAA+ region; sequence PLDPRLTFQS…GAINRLLAHS (223 aa). Glycine 179, glycine 181, lysine 182, and threonine 183 together coordinate ATP. Positions 355–475 are domain IV, binds dsDNA; it reads KLNAQPVTLE…VELLKRQLQE (121 aa).

This sequence belongs to the DnaA family. In terms of assembly, oligomerizes as a right-handed, spiral filament on DNA at oriC.

The protein localises to the cytoplasm. Its function is as follows. Plays an essential role in the initiation and regulation of chromosomal replication. ATP-DnaA binds to the origin of replication (oriC) to initiate formation of the DNA replication initiation complex once per cell cycle. Binds the DnaA box (a 9 base pair repeat at the origin) and separates the double-stranded (ds)DNA. Forms a right-handed helical filament on oriC DNA; dsDNA binds to the exterior of the filament while single-stranded (ss)DNA is stabiized in the filament's interior. The ATP-DnaA-oriC complex binds and stabilizes one strand of the AT-rich DNA unwinding element (DUE), permitting loading of DNA polymerase. After initiation quickly degrades to an ADP-DnaA complex that is not apt for DNA replication. Binds acidic phospholipids. The chain is Chromosomal replication initiator protein DnaA from Nitrobacter winogradskyi (strain ATCC 25391 / DSM 10237 / CIP 104748 / NCIMB 11846 / Nb-255).